Consider the following 166-residue polypeptide: MELAKGNAEIQVGIADYKVAASPNRLITLGLGSCVGVVLYDPVKKVGGLLHIMLPDSTQFNNVTKPAKFADTGIPLMIDEIKRLGGIPSRLTAKLAGGAQMFSGLDEKFVLNIGQRNSKMVKEILSRMGIRILAEELGGNRGRTMIFDIASGQVTIRTIGSPLKVI.

Belongs to the CheD family.

It carries out the reaction L-glutaminyl-[protein] + H2O = L-glutamyl-[protein] + NH4(+). Its function is as follows. Probably deamidates glutamine residues to glutamate on methyl-accepting chemotaxis receptors (MCPs), playing an important role in chemotaxis. The protein is Probable chemoreceptor glutamine deamidase CheD of Desulforamulus reducens (strain ATCC BAA-1160 / DSM 100696 / MI-1) (Desulfotomaculum reducens).